The sequence spans 292 residues: NAD kinase (292 aa).

Residue D73 is the Proton acceptor of the active site. NAD(+) contacts are provided by residues 73-74 (DG), 147-148 (NE), H158, R175, D177, 188-193 (TAYSLS), and Q247.

Belongs to the NAD kinase family. A divalent metal cation is required as a cofactor.

The protein resides in the cytoplasm. It catalyses the reaction NAD(+) + ATP = ADP + NADP(+) + H(+). Functionally, involved in the regulation of the intracellular balance of NAD and NADP, and is a key enzyme in the biosynthesis of NADP. Catalyzes specifically the phosphorylation on 2'-hydroxyl of the adenosine moiety of NAD to yield NADP. This chain is NAD kinase, found in Salmonella agona (strain SL483).